The sequence spans 343 residues: Ribosomal RNA small subunit methyltransferase C (343 aa).

This sequence belongs to the methyltransferase superfamily. RsmC family. In terms of assembly, monomer.

It is found in the cytoplasm. The catalysed reaction is guanosine(1207) in 16S rRNA + S-adenosyl-L-methionine = N(2)-methylguanosine(1207) in 16S rRNA + S-adenosyl-L-homocysteine + H(+). Its function is as follows. Specifically methylates the guanine in position 1207 of 16S rRNA in the 30S particle. The polypeptide is Ribosomal RNA small subunit methyltransferase C (Shewanella sediminis (strain HAW-EB3)).